Consider the following 215-residue polypeptide: Cytochrome b6 (215 aa).

Residues 32-52 (IFYCLGGITLTCFIVQVATGF) traverse the membrane as a helical segment. C35 contacts heme c. Residues H86 and H100 each coordinate heme b. 3 helical membrane-spanning segments follow: residues 90 to 110 (ASMM…TGGF), 116 to 136 (LTWI…VTGY), and 186 to 206 (LHTF…FLMI). The heme b site is built by H187 and H202.

This sequence belongs to the cytochrome b family. PetB subfamily. As to quaternary structure, the 4 large subunits of the cytochrome b6-f complex are cytochrome b6, subunit IV (17 kDa polypeptide, PetD), cytochrome f and the Rieske protein, while the 4 small subunits are PetG, PetL, PetM and PetN. The complex functions as a dimer. It depends on heme b as a cofactor. Requires heme c as cofactor.

The protein localises to the plastid. It is found in the chloroplast thylakoid membrane. Functionally, component of the cytochrome b6-f complex, which mediates electron transfer between photosystem II (PSII) and photosystem I (PSI), cyclic electron flow around PSI, and state transitions. This is Cytochrome b6 from Chara vulgaris (Common stonewort).